The sequence spans 670 residues: WD repeat-containing protein 48 homolog (670 aa).

7 WD repeats span residues 13–52 (RHRN…SQEP), 59–98 (HHND…CMST), 101–140 (THRD…ALTA), 152–191 (GSKD…KIAK), 194–233 (GHTE…CIQT), 236–275 (VHSE…NSVL), and 278–317 (EERA…KLSN). Positions 321 to 348 (SSNSSINSGGGGDGTPVTNSASNATPAS) are disordered. Residues 338-348 (TNSASNATPAS) show a composition bias toward low complexity. A WD 8 repeat occupies 359–398 (KGGAAIKKYHVLNDKRFMLTKDSEQNVAIYDVLKVKKVED). Residues 613-625 (GGGGGSSTGGGGN) are compositionally biased toward gly residues. Residues 613–645 (GGGGGSSTGGGGNSNSSQNNSQSDANSEGSQVP) form a disordered region. Positions 626–635 (SNSSQNNSQS) are enriched in low complexity.

The protein belongs to the WD repeat WDR48 family. Catalytic component of the Usp12-46 deubiquitylase complex consisting of Usp12-46, Wdr20 and Uaf1; regulatory subunit that, together wtih Wdr20, stabilizes Usp12-46. The Usp12-46 deubiquitylase complex associates with arr/arrow; the interaction leads to deubiquitination and stabilization of arr/arrow.

Functionally, regulatory component of the Usp12-46 deubiquitylase complex. activates deubiquitination by increasing the catalytic turnover without increasing the affinity of deubiquitinating enzymes for the substrate. The complex deubiquitylates the wg/wingless-signaling receptor arr/arrow, which stabilizes the receptor and increases its concentration at the cell surface; this enhances the sensitivity of cells to wg/wingless-signal stimulation. This increases the amplitude and spatial range of the signaling response to the wg/wingless morphogen gradient, facilitating the precise concentration-dependent regulation of its target genes. Together with Wdr20 and Usp12-46 required for wg/wingless-mediated signaling in the wing imaginal disc and for wg/wingless-dependent regulation of intestinal stem cell proliferation. In Culex quinquefasciatus (Southern house mosquito), this protein is WD repeat-containing protein 48 homolog.